A 276-amino-acid chain; its full sequence is Non-homologous end joining protein Ku (276 aa).

Residues 11–177 form the Ku domain; it reads ISFGLVHIPI…PEEIRSMEPL (167 aa). The segment at 256–276 is disordered; the sequence is QVKTQQKKEAAPKKERRRKTS.

Belongs to the prokaryotic Ku family. In terms of assembly, homodimer. Interacts with LigD.

With LigD forms a non-homologous end joining (NHEJ) DNA repair enzyme, which repairs dsDNA breaks with reduced fidelity. Binds linear dsDNA with 5'- and 3'- overhangs but not closed circular dsDNA nor ssDNA. Recruits and stimulates the ligase activity of LigD. The sequence is that of Non-homologous end joining protein Ku from Heliobacterium modesticaldum (strain ATCC 51547 / Ice1).